The primary structure comprises 140 residues: Truncated tyrosine phosphatase D1 (140 aa).

Positions 1-140 (MRRPNCIAEI…SAQWIQFLKK (140 aa)) constitute a Tyrosine-protein phosphatase domain.

Belongs to the protein-tyrosine phosphatase family.

The chain is Truncated tyrosine phosphatase D1 (D1) from Microplitis demolitor bracovirus (isolate Webb) (MdBV).